The chain runs to 558 residues: Outer membrane transporter CdiB (558 aa).

A signal peptide spans 1–25; that stretch reads MFVSSRKTGLIVCFSLIGYTASAFS. A coiled-coil region spans residues 34-62; it reads NETQQRQSEVIEQSRQQREALQQLNNIVQ. One can recognise a POTRA domain in the interval 76–151; the sequence is FTLREIRFNH…GVLQLEILEG (76 aa).

The protein belongs to the TPS (TC 1.B.20) family.

The protein localises to the cell outer membrane. Functionally, probable outer membrane protein component of a toxin-immunity protein module, which functions as a cellular contact-dependent growth inhibition (CDI) system. CDI modules allow bacteria to communicate with and inhibit the growth of closely related neighboring bacteria in a contact-dependent fashion. This protein may be required for secretion and assembly of the CdiA toxin. In terms of biological role, probable member of a two partner secretion pathway (TPS) in which it mediates the secretion of CdiA. In Dickeya dadantii (strain 3937) (Erwinia chrysanthemi (strain 3937)), this protein is Outer membrane transporter CdiB (cdiB).